Reading from the N-terminus, the 200-residue chain is Small ribosomal subunit protein uS4 (200 aa).

Positions 1-13 (MARYRGPKQKIAR) are enriched in basic residues. The tract at residues 1-44 (MARYRGPKQKIARRFKEPIFGPSKALERKPYPPGQHGQSRRRRE) is disordered. The region spanning 92 to 154 (ARLDNTVFRM…SQDLEVIQTN (63 aa)) is the S4 RNA-binding domain.

It belongs to the universal ribosomal protein uS4 family. Part of the 30S ribosomal subunit. Contacts protein S5. The interaction surface between S4 and S5 is involved in control of translational fidelity.

Functionally, one of the primary rRNA binding proteins, it binds directly to 16S rRNA where it nucleates assembly of the body of the 30S subunit. Its function is as follows. With S5 and S12 plays an important role in translational accuracy. This Salinibacter ruber (strain DSM 13855 / M31) protein is Small ribosomal subunit protein uS4.